Reading from the N-terminus, the 273-residue chain is Coiled-coil domain-containing protein 3 (273 aa).

The N-terminal stretch at 1–21 (MPLPLLLAALCLAASPAPARA) is a signal peptide. Asn-100 carries an N-linked (GlcNAc...) asparagine glycan. A coiled-coil region spans residues 188–250 (SVQKALFEEE…VNQKLNEKLG (63 aa)).

As to quaternary structure, homodimer. Post-translationally, N-glycosylated. As to expression, expressed in aorta and adipose tissue. Enriched in mature adipocytes. Over-expressed in adipose tissue from either hormonally-induced or nutritionally-regulated obese mice models.

It is found in the secreted. Its function is as follows. Negatively regulates TNF-alpha-induced pro-inflammatory response in endothelial cells (ECs) via inhibition of TNF-alpha-induced NF-kappaB activation in ECs. Positively regulates lipid accumulation in adipose cells. This chain is Coiled-coil domain-containing protein 3 (Ccdc3), found in Mus musculus (Mouse).